Consider the following 325-residue polypeptide: 33 kDa chaperonin (325 aa).

2 disulfides stabilise this stretch: C260–C262 and C293–C296.

Belongs to the HSP33 family. In terms of processing, under oxidizing conditions two disulfide bonds are formed involving the reactive cysteines. Under reducing conditions zinc is bound to the reactive cysteines and the protein is inactive.

It localises to the cytoplasm. Redox regulated molecular chaperone. Protects both thermally unfolding and oxidatively damaged proteins from irreversible aggregation. Plays an important role in the bacterial defense system toward oxidative stress. The protein is 33 kDa chaperonin of Aquifex aeolicus (strain VF5).